We begin with the raw amino-acid sequence, 271 residues long: 3-methyl-2-oxobutanoate hydroxymethyltransferase 1 (271 aa).

2 residues coordinate Mg(2+): aspartate 53 and aspartate 92. 3-methyl-2-oxobutanoate contacts are provided by residues 53–54, aspartate 92, and lysine 120; that span reads DS. Glutamate 122 contacts Mg(2+). Glutamate 189 acts as the Proton acceptor in catalysis.

It belongs to the PanB family. Homodecamer; pentamer of dimers. The cofactor is Mg(2+).

It is found in the cytoplasm. It catalyses the reaction 3-methyl-2-oxobutanoate + (6R)-5,10-methylene-5,6,7,8-tetrahydrofolate + H2O = 2-dehydropantoate + (6S)-5,6,7,8-tetrahydrofolate. It participates in cofactor biosynthesis; (R)-pantothenate biosynthesis; (R)-pantoate from 3-methyl-2-oxobutanoate: step 1/2. Catalyzes the reversible reaction in which hydroxymethyl group from 5,10-methylenetetrahydrofolate is transferred onto alpha-ketoisovalerate to form ketopantoate. The protein is 3-methyl-2-oxobutanoate hydroxymethyltransferase 1 of Burkholderia ambifaria (strain ATCC BAA-244 / DSM 16087 / CCUG 44356 / LMG 19182 / AMMD) (Burkholderia cepacia (strain AMMD)).